We begin with the raw amino-acid sequence, 234 residues long: Large ribosomal subunit protein eL6 (234 aa).

The protein belongs to the eukaryotic ribosomal protein eL6 family.

This Mesembryanthemum crystallinum (Common ice plant) protein is Large ribosomal subunit protein eL6 (RPL6).